A 509-amino-acid chain; its full sequence is Maturase K (509 aa).

The protein belongs to the intron maturase 2 family. MatK subfamily.

Its subcellular location is the plastid. It localises to the chloroplast. In terms of biological role, usually encoded in the trnK tRNA gene intron. Probably assists in splicing its own and other chloroplast group II introns. In Nymphaea odorata (White water lily), this protein is Maturase K.